Here is a 351-residue protein sequence, read N- to C-terminus: Auxin-responsive protein IAA27 (351 aa).

The disordered stretch occupies residues 1 to 37; it reads MMNLISFETPPLGRRSQDGGSSSSSITAATTTTNKAK. Residues 21–34 are compositionally biased toward low complexity; it reads SSSSSITAATTTTN. One can recognise a PB1 domain in the interval 233–327; the sequence is NMFAKVHMDG…SAKRLYIAKN (95 aa).

Belongs to the Aux/IAA family. As to quaternary structure, homodimers and heterodimers. Expressed in roots and seedlings.

The protein resides in the nucleus. In terms of biological role, aux/IAA proteins are short-lived transcriptional factors that function as repressors of early auxin response genes at low auxin concentrations. This Oryza sativa subsp. japonica (Rice) protein is Auxin-responsive protein IAA27 (IAA27).